The following is a 2157-amino-acid chain: MGAQVSRQNVGTHSTQNSVSNGSSLNYFNINYFKDAASSGASRLDFSQDPSKFTDPVKDVLEKGIPTLQSPSVEACGYSDRIMQITRGDSTITSQDVANAVVGYGVWPHYLTPQDATAIDKPTQPDTSSNRFYTLESKHWNGSSKGWWWKLPDALKDMGIFGENMYYHFLGRSGYTVHVQCNASKFHQGTLLVAMIPEHQLASAKHGSVTAGYKLTHPGEAGRDVSQERDASLRQPSDDSWLNFDGTLLGNLLIFPHQFINLRSNNSATLIVPYVNAVPMDSMLRHNNWSLVIIPISPLRSETTSSNIVPITVSISPMCAEFSGARAKNIKQGLPVYITPGSGQFMTTDDMQSPCALPWYHPTKEISIPGEVKNLIEMCQVDTLIPVNNVGNNVGNVSMYTVQLGNQTGMAQKVFSIKVDITSQPLATTLIGEIASYYTHWTGSLRFSFMFCGTANTTLKLLLAYTPPGIDEPTTRKDAMLGTHVVWDVGLQSTISLVVPWVSASHFRLTADNKYSMAGYITCWYQTNLVVPPSTPQTADMLCFVSACKDFCLRMARDTDLHIQSGPIEQNPVENYIDEVLNEVLVVPNIKESHHTTSNSAPLLDAAETGHTSNVQPEDAIETRYVITSQTRDEMSIESFLGRSGCVHISRIKVDYTDYNGQDINFTKWKITLQEMAQIRRKFELFTYVRFDSEITLVPCIAGRGDDIGHIVMQYMYVPPGAPIPSKRNDFSWQSGTNMSIFWQHGQPFPRFSLPFLSIASAYYMFYDGYDGDNTSSKYGSVVTNDMGTICSRIVTEKQKHSVVITTHIYHKAKHTKAWCPRPPRAVPYTHSHVTNYMPETGDVTTAIVRRNTITTAGPSDLYVHVGNLIYRNLHLFNSEMHDSILISYSSDLIIYRTNTIGDDYIPNCNCTEATYYCRHKNRYYPIKVTPHDWYEIQESEYYPKHIQYNLLIGEGPCEPGDCGGKLLCRHGVIGIITAGGEGHVAFIDLRQFHCAEEQGITDYIHMLGEAFGNGFVDSVKEQINAINPINNISKKVIKWLLRIISAMVIIIRNSSDPQTIIATLTLIGCNGSPWRFLKEKFCKWTQLTYIHKESDSWLKKFTEMCNAARGLEWIGNKISKFIDWMKSMLPQAQLKVKYLNEIKKLSLLEKQIENLRAADSATQEKIKCEIDTLHDLSCKFLPLYAHEAKRIKVLYNKCSNIIKQRKRSEPVAVMIHGPPGTGKSITTNFLARMITNESDVYSLPPDPKYFDGYDNQSVVIMDDIMQNPDGEDMTLFCQMVSSVTFIPPMADLPDKGKPFDSRFILCSTNHSLLAPPTISSLPAMNRRFFFDLDIVVHDNYKDTQGKLDVSKAFRPCNVNTKIGNAKCCPFVCGKAVXFKDRSTCSTYTLAQVYNHILEEDKRRRQVVDVMSAIFQGPISLDXPPPPAIXDLLQSVRTPEVIKYCQDNKWVIPAECQVERDLNIANSIIAIIANIISIAGIIFVIYKLFCSLQGPYSGEPKPKTKVPERRVVAQGPEEEFGRSILKNNTCVITTGNGKFTGLGIHDRILIIPTHADPGREVQVNGVHTKVLDSYDLYNRDGVKLEITVIQLDRNEKFRDIRKYIPETEDDYPECNLALSANQDEPTIIKVGDVVSYGNILLSGNQTARMLKYNYPTKSGYCGGVLYKIGQILGIHVGGNGRDGFSAMLLRSYFTDTQGQIKVNKHATECGLPTIHTPSKTKLQPSVFYDVFPGSKEPAVLTDNDPRLEVNFKEALFSKYKGNVECNLNEHMEIAIAHYSAQLMTLDIDSRPIALEDSVFGIEGLEALDLNTSAGFPYVTMGIKKRDLINNKTKDISRLKEALDKYGVDLPMITFLKDELRKKEKISTGKTRVIEASSINDTILFRTTFGNLFSKFHLNPGVVTGSAVGCDPETFWSKIPVMLDGDCIMAFDYTNYDGSIHPVWFQALKKVLENLSFQSNLIDRLCYSKHLFKSTYYEVAGGVPSGCSGTSIFNTMINNIIIRTLVLDAYKNIDLDKLKIIAYGDDVIFSYKYTLDMEAIANEGKKYGLTITPADKSNEFKKLDYSNVTFLKRGFKQDERHTFLIHPTFPVEEIHESIRWTKKPSQMQEHVLSLCHLMWHNGRKVYEDFSSKIRSVSAGRALYIPPYDLLKHEWYEKF.

Residue glycine 2 is the site of N-myristoyl glycine; by host attachment. Residues 2–1470 (GAQVSRQNVG…DLNIANSIIA (1469 aa)) lie on the Cytoplasmic side of the membrane. The interval 567 to 584 (PIEQNPVENYIDEVLNEV) is amphipathic alpha-helix. Active-site for protease 2A activity residues include histidine 875 and aspartate 892. Residues cysteine 909 and cysteine 911 each coordinate Zn(2+). Residue cysteine 963 is the For protease 2A activity of the active site. The Zn(2+) site is built by cysteine 969 and histidine 971. The interval 1095-1164 (SDSWLKKFTE…NLRAADSATQ (70 aa)) is membrane-binding. An oligomerization region spans residues 1095–1228 (SDSWLKKFTE…PPGTGKSITT (134 aa)). Residues 1116–1120 (GNKIS) are RNA-binding. Residues 1188–1350 (EAKRIKVLYN…YKDTQGKLDV (163 aa)) enclose the SF3 helicase domain. Zn(2+) is bound by residues cysteine 1357, cysteine 1368, and cysteine 1373. A C4-type; degenerate zinc finger spans residues 1357–1373 (CNVNTKIGNAKCCPFVC). The segment at 1400-1407 (EDKRRRQV) is RNA-binding. The segment at 1411 to 1416 (MSAIFQ) is oligomerization. Residues 1471-1486 (IIANIISIAGIIFVIY) lie within the membrane without spanning it. The Cytoplasmic segment spans residues 1487-2157 (KLFCSLQGPY…LLKHEWYEKF (671 aa)). Tyrosine 1496 is subject to O-(5'-phospho-RNA)-tyrosine. Residues 1515 to 1693 (GPEEEFGRSI…FSAMLLRSYF (179 aa)) form the Peptidase C3 domain. Active-site for protease 3C activity residues include histidine 1554, glutamate 1585, and cysteine 1661. The 114-residue stretch at 1925 to 2038 (DCIMAFDYTN…SYKYTLDMEA (114 aa)) folds into the RdRp catalytic domain. 2 residues coordinate Mg(2+): aspartate 1931 and aspartate 2024.

This sequence belongs to the picornaviruses polyprotein family. Interacts with capsid protein VP1 and capsid protein VP3 to form heterotrimeric protomers. In terms of assembly, interacts with capsid protein VP0, and capsid protein VP3 to form heterotrimeric protomers. Five protomers subsequently associate to form pentamers which serve as building blocks for the capsid. Interacts with capsid protein VP2, capsid protein VP3 and capsid protein VP4 following cleavage of capsid protein VP0. As to quaternary structure, interacts with capsid protein VP1 and capsid protein VP3 in the mature capsid. Interacts with capsid protein VP0 and capsid protein VP1 to form heterotrimeric protomers. Five protomers subsequently associate to form pentamers which serve as building blocks for the capsid. Interacts with capsid protein VP4 in the mature capsid. Interacts with protein 2C; this interaction may be important for virion morphogenesis. In terms of assembly, interacts with capsid protein VP1 and capsid protein VP3. As to quaternary structure, homodimer. Homohexamer; forms a hexameric ring structure with 6-fold symmetry characteristic of AAA+ ATPases. Interacts (via N-terminus) with host RTN3 (via reticulon domain); this interaction is important for viral replication. Interacts with capsid protein VP3; this interaction may be important for virion morphogenesis. In terms of assembly, interacts with protein 3CD. As to quaternary structure, homodimer. Interacts with host GBF1. Interacts (via GOLD domain) with host ACBD3 (via GOLD domain); this interaction allows the formation of a viral protein 3A/ACBD3 heterotetramer with a 2:2 stoichiometry, which will stimulate the recruitment of host PI4KB in order to synthesize PI4P at the viral RNA replication sites. Interacts with RNA-directed RNA polymerase. In terms of assembly, interacts with protein 3AB and with RNA-directed RNA polymerase. As to quaternary structure, interacts with Viral protein genome-linked and with protein 3CD. The cofactor is Mg(2+). Specific enzymatic cleavages in vivo by the viral proteases yield processing intermediates and the mature proteins. In terms of processing, myristoylation is required for the formation of pentamers during virus assembly. Further assembly of 12 pentamers and a molecule of genomic RNA generates the provirion. Post-translationally, during virion maturation, immature virions are rendered infectious following cleavage of VP0 into VP4 and VP2. This maturation seems to be an autocatalytic event triggered by the presence of RNA in the capsid and it is followed by a conformational change infectious virion. Myristoylation is required during RNA encapsidation and formation of the mature virus particle. In terms of processing, VPg is uridylylated by the polymerase into VPg-pUpU. This acts as a nucleotide-peptide primer for the genomic RNA replication.

The protein resides in the virion. The protein localises to the host cytoplasm. Its subcellular location is the host cytoplasmic vesicle membrane. It localises to the host nucleus. It catalyses the reaction a ribonucleoside 5'-triphosphate + H2O = a ribonucleoside 5'-diphosphate + phosphate + H(+). The catalysed reaction is Selective cleavage of Tyr-|-Gly bond in the picornavirus polyprotein.. It carries out the reaction RNA(n) + a ribonucleoside 5'-triphosphate = RNA(n+1) + diphosphate. The enzyme catalyses Selective cleavage of Gln-|-Gly bond in the poliovirus polyprotein. In other picornavirus reactions Glu may be substituted for Gln, and Ser or Thr for Gly.. Its activity is regulated as follows. Replication or transcription is subject to high level of random mutations by the nucleotide analog ribavirin. In terms of biological role, forms an icosahedral capsid of pseudo T=3 symmetry with capsid proteins VP2 and VP3. The capsid is 300 Angstroms in diameter, composed of 60 copies of each capsid protein and enclosing the viral positive strand RNA genome. Capsid protein VP1 mainly forms the vertices of the capsid. Capsid protein VP1 interacts with host cell receptor to provide virion attachment to target host cells. This attachment induces virion internalization. Tyrosine kinases are probably involved in the entry process. After binding to its receptor, the capsid undergoes conformational changes. Capsid protein VP1 N-terminus (that contains an amphipathic alpha-helix) and capsid protein VP4 are externalized. Together, they shape a pore in the host membrane through which viral genome is translocated to host cell cytoplasm. Functionally, forms an icosahedral capsid of pseudo T=3 symmetry with capsid proteins VP2 and VP3. The capsid is 300 Angstroms in diameter, composed of 60 copies of each capsid protein and enclosing the viral positive strand RNA genome. Lies on the inner surface of the capsid shell. After binding to the host receptor, the capsid undergoes conformational changes. Capsid protein VP4 is released, Capsid protein VP1 N-terminus is externalized, and together, they shape a pore in the host membrane through which the viral genome is translocated into the host cell cytoplasm. Its function is as follows. Component of immature procapsids, which is cleaved into capsid proteins VP4 and VP2 after maturation. Allows the capsid to remain inactive before the maturation step. In terms of biological role, cysteine protease that cleaves viral polyprotein and specific host proteins. It is responsible for the autocatalytic cleavage between the P1 and P2 regions, which is the first cleavage occurring in the polyprotein. Also cleaves the host translation initiation factor EIF4G1, in order to shut down the capped cellular mRNA translation. Inhibits the host nucleus-cytoplasm protein and RNA trafficking by cleaving host members of the nuclear pores. Counteracts stress granule formation probably by antagonizing its assembly or promoting its dissassembly. Functionally, plays an essential role in the virus replication cycle by acting as a viroporin. Creates a pore in the host endoplasmic reticulum and as a consequence releases Ca2+ in the cytoplasm of infected cell. In turn, high levels of cytoplasmic calcium may trigger membrane trafficking and transport of viral ER-associated proteins to viroplasms, sites of viral genome replication. Induces and associates with structural rearrangements of intracellular membranes. Displays RNA-binding, nucleotide binding and NTPase activities. May play a role in virion morphogenesis and viral RNA encapsidation by interacting with the capsid protein VP3. Its function is as follows. Localizes the viral replication complex to the surface of membranous vesicles. Together with protein 3CD binds the Cis-Active RNA Element (CRE) which is involved in RNA synthesis initiation. Acts as a cofactor to stimulate the activity of 3D polymerase, maybe through a nucleid acid chaperone activity. In terms of biological role, localizes the viral replication complex to the surface of membranous vesicles. It inhibits host cell endoplasmic reticulum-to-Golgi apparatus transport and causes the disassembly of the Golgi complex, possibly through GBF1 interaction. This would result in depletion of MHC, trail receptors and IFN receptors at the host cell surface. Plays an essential role in viral RNA replication by recruiting ACBD3 and PI4KB at the viral replication sites, thereby allowing the formation of the rearranged membranous structures where viral replication takes place. Functionally, acts as a primer for viral RNA replication and remains covalently bound to viral genomic RNA. VPg is uridylylated prior to priming replication into VPg-pUpU. The oriI viral genomic sequence may act as a template for this. The VPg-pUpU is then used as primer on the genomic RNA poly(A) by the RNA-dependent RNA polymerase to replicate the viral genome. During genome replication, the VPg-RNA linkage is removed by the host TDP2, thereby accelerating replication. During the late stage of the replication cycle, host TDP2 is excluded from sites of viral RNA synthesis and encapsidation, allowing for the generation of progeny virions. Involved in the viral replication complex and viral polypeptide maturation. It exhibits protease activity with a specificity and catalytic efficiency that is different from protease 3C. Protein 3CD lacks polymerase activity. Protein 3CD binds to the 5'UTR of the viral genome. Its function is as follows. Major viral protease that mediates proteolytic processing of the polyprotein. Cleaves host EIF5B, contributing to host translation shutoff. Also cleaves host PABPC1, contributing to host translation shutoff. In terms of biological role, replicates the viral genomic RNA on the surface of intracellular membranes. May form linear arrays of subunits that propagate along a strong head-to-tail interaction called interface-I. Covalently attaches UMP to a tyrosine of VPg, which is used to prime RNA synthesis. The positive stranded RNA genome is first replicated at virus induced membranous vesicles, creating a dsRNA genomic replication form. This dsRNA is then used as template to synthesize positive stranded RNA genomes. ss(+)RNA genomes are either translated, replicated or encapsidated. This chain is Genome polyprotein, found in Homo sapiens (Human).